A 250-amino-acid polypeptide reads, in one-letter code: UPF0014 membrane protein YjkA (250 aa).

6 helical membrane-spanning segments follow: residues 3 to 23 (YLSLSLTMIFVLIALFLSKSF), 32 to 52 (IIATIRAAVQLLIIGYVLSLI), 57 to 77 (HPVFILLMVLLMLAVAAQNVI), 91 to 111 (FAALAIVEIVTQGILLSLHII), 117 to 137 (YVIPISGMVIGNSMVLSSLFL), and 214 to 234 (LLIVFTTMASAALTCVILSVL).

The protein belongs to the UPF0014 family.

The protein localises to the cell membrane. In Bacillus subtilis (strain 168), this protein is UPF0014 membrane protein YjkA (yjkA).